A 284-amino-acid polypeptide reads, in one-letter code: Tropomyosin (284 aa).

Positions 1-284 (MDGIKKKMIA…DQTFAELTGY (284 aa)) form a coiled coil. Basic and acidic residues-rich tracts occupy residues 29–42 (LKQKEEEQEKKETE) and 111–136 (AKFDEASKTAEESERGRKELEIRSIA). 2 disordered regions span residues 29–49 (LKQKEEEQEKKETEIGELNNR) and 111–149 (AKFDEASKTAEESERGRKELEIRSIADDEGLSQLEDQQK).

The protein belongs to the tropomyosin family.

Functionally, tropomyosin, in association with the troponin complex, plays a central role in the calcium dependent regulation of muscle contraction. This chain is Tropomyosin, found in Clonorchis sinensis (Chinese liver fluke).